The sequence spans 204 residues: Nucleoside triphosphate pyrophosphatase (204 aa).

The Proton acceptor role is filled by Asp-78.

This sequence belongs to the Maf family. It depends on a divalent metal cation as a cofactor.

It localises to the cytoplasm. The catalysed reaction is a ribonucleoside 5'-triphosphate + H2O = a ribonucleoside 5'-phosphate + diphosphate + H(+). It catalyses the reaction a 2'-deoxyribonucleoside 5'-triphosphate + H2O = a 2'-deoxyribonucleoside 5'-phosphate + diphosphate + H(+). In terms of biological role, nucleoside triphosphate pyrophosphatase. May have a dual role in cell division arrest and in preventing the incorporation of modified nucleotides into cellular nucleic acids. The protein is Nucleoside triphosphate pyrophosphatase of Prochlorococcus marinus (strain MIT 9215).